The chain runs to 419 residues: UDP-N-acetylglucosamine 1-carboxyvinyltransferase (419 aa).

22-23 (KN) provides a ligand contact to phosphoenolpyruvate. Arg-95 is a UDP-N-acetyl-alpha-D-glucosamine binding site. The active-site Proton donor is the Cys-119. Cys-119 bears the 2-(S-cysteinyl)pyruvic acid O-phosphothioketal mark. UDP-N-acetyl-alpha-D-glucosamine is bound by residues 164–167 (KVSV), Asp-308, and Ile-330.

This sequence belongs to the EPSP synthase family. MurA subfamily.

The protein resides in the cytoplasm. It catalyses the reaction phosphoenolpyruvate + UDP-N-acetyl-alpha-D-glucosamine = UDP-N-acetyl-3-O-(1-carboxyvinyl)-alpha-D-glucosamine + phosphate. Its pathway is cell wall biogenesis; peptidoglycan biosynthesis. Its function is as follows. Cell wall formation. Adds enolpyruvyl to UDP-N-acetylglucosamine. The protein is UDP-N-acetylglucosamine 1-carboxyvinyltransferase of Rickettsia peacockii (strain Rustic).